The primary structure comprises 297 residues: Acetyl-coenzyme A carboxylase carboxyl transferase subunit beta (297 aa).

The tract at residues 1-23 (MSWIERILGRTSSSSSSSKSKVP) is disordered. The CoA carboxyltransferase N-terminal domain maps to 26–295 (VWTKCTSCEQ…PFKTAELIVE (270 aa)). C30, C33, C49, and C52 together coordinate Zn(2+). Residues 30-52 (CTSCEQVLYSEELKRNMHVCPKC) form a C4-type zinc finger.

It belongs to the AccD/PCCB family. As to quaternary structure, acetyl-CoA carboxylase is a heterohexamer composed of biotin carboxyl carrier protein (AccB), biotin carboxylase (AccC) and two subunits each of ACCase subunit alpha (AccA) and ACCase subunit beta (AccD). Requires Zn(2+) as cofactor.

It is found in the cytoplasm. It carries out the reaction N(6)-carboxybiotinyl-L-lysyl-[protein] + acetyl-CoA = N(6)-biotinyl-L-lysyl-[protein] + malonyl-CoA. It participates in lipid metabolism; malonyl-CoA biosynthesis; malonyl-CoA from acetyl-CoA: step 1/1. Its function is as follows. Component of the acetyl coenzyme A carboxylase (ACC) complex. Biotin carboxylase (BC) catalyzes the carboxylation of biotin on its carrier protein (BCCP) and then the CO(2) group is transferred by the transcarboxylase to acetyl-CoA to form malonyl-CoA. The sequence is that of Acetyl-coenzyme A carboxylase carboxyl transferase subunit beta from Actinobacillus pleuropneumoniae serotype 7 (strain AP76).